Reading from the N-terminus, the 80-residue chain is RNA-binding protein KhpA (80 aa).

Positions 33–80 (LEILQLRVASEDVGKVIGKHGRIARALRTLLSASAHASQTRYALEIID) constitute a KH domain.

The protein belongs to the KhpA RNA-binding protein family. As to quaternary structure, forms a complex with KhpB.

The protein resides in the cytoplasm. In terms of biological role, a probable RNA chaperone. Forms a complex with KhpB which binds to cellular RNA and controls its expression. Plays a role in peptidoglycan (PG) homeostasis and cell length regulation. This is RNA-binding protein KhpA from Treponema pallidum (strain Nichols).